Consider the following 348-residue polypeptide: Histidinol-phosphate aminotransferase (348 aa).

K211 carries the post-translational modification N6-(pyridoxal phosphate)lysine.

The protein belongs to the class-II pyridoxal-phosphate-dependent aminotransferase family. Histidinol-phosphate aminotransferase subfamily. As to quaternary structure, homodimer. The cofactor is pyridoxal 5'-phosphate.

It catalyses the reaction L-histidinol phosphate + 2-oxoglutarate = 3-(imidazol-4-yl)-2-oxopropyl phosphate + L-glutamate. Its pathway is amino-acid biosynthesis; L-histidine biosynthesis; L-histidine from 5-phospho-alpha-D-ribose 1-diphosphate: step 7/9. The protein is Histidinol-phosphate aminotransferase of Pseudomonas entomophila (strain L48).